Consider the following 696-residue polypeptide: D-(-)-3-hydroxybutyrate oligomer hydrolase (696 aa).

Positions 1-26 are cleaved as a signal peptide; it reads MTKLGWGRRVVWGAALAAVAMLGACN. Ser309 (charge relay system) is an active-site residue.

It belongs to the D-(-)-3-hydroxybutyrate oligomer hydrolase family.

Its subcellular location is the secreted. The enzyme catalyses (3R)-hydroxybutanoate dimer + H2O = 2 (R)-3-hydroxybutanoate + H(+). The protein operates within lipid metabolism; butanoate metabolism. In terms of biological role, participates in the degradation of poly-3-hydroxybutyrate (PHB). It works downstream of poly(3-hydroxybutyrate) depolymerase, hydrolyzing D(-)-3-hydroxybutyrate oligomers of various length (3HB-oligomers) into 3HB-monomers. In Burkholderia cenocepacia (strain HI2424), this protein is D-(-)-3-hydroxybutyrate oligomer hydrolase.